The primary structure comprises 620 residues: Dihydroxy-acid dehydratase (620 aa).

D82 is a binding site for Mg(2+). C123 is a [2Fe-2S] cluster binding site. Mg(2+) is bound by residues D124 and K125. Residue K125 is modified to N6-carboxylysine. Residue C197 coordinates [2Fe-2S] cluster. E493 lines the Mg(2+) pocket. The active-site Proton acceptor is the S519.

It belongs to the IlvD/Edd family. Homodimer. Requires [2Fe-2S] cluster as cofactor. It depends on Mg(2+) as a cofactor.

The catalysed reaction is (2R)-2,3-dihydroxy-3-methylbutanoate = 3-methyl-2-oxobutanoate + H2O. The enzyme catalyses (2R,3R)-2,3-dihydroxy-3-methylpentanoate = (S)-3-methyl-2-oxopentanoate + H2O. It functions in the pathway amino-acid biosynthesis; L-isoleucine biosynthesis; L-isoleucine from 2-oxobutanoate: step 3/4. Its pathway is amino-acid biosynthesis; L-valine biosynthesis; L-valine from pyruvate: step 3/4. Its function is as follows. Functions in the biosynthesis of branched-chain amino acids. Catalyzes the dehydration of (2R,3R)-2,3-dihydroxy-3-methylpentanoate (2,3-dihydroxy-3-methylvalerate) into 2-oxo-3-methylpentanoate (2-oxo-3-methylvalerate) and of (2R)-2,3-dihydroxy-3-methylbutanoate (2,3-dihydroxyisovalerate) into 2-oxo-3-methylbutanoate (2-oxoisovalerate), the penultimate precursor to L-isoleucine and L-valine, respectively. The sequence is that of Dihydroxy-acid dehydratase from Bifidobacterium longum (strain NCC 2705).